The following is a 356-amino-acid chain: 3-dehydroquinate synthase (356 aa).

NAD(+) is bound by residues 106–110, 130–131, K143, and K152; these read GVVGD and TT. 3 residues coordinate Zn(2+): E185, H248, and H265.

The protein belongs to the sugar phosphate cyclases superfamily. Dehydroquinate synthase family. Requires Co(2+) as cofactor. Zn(2+) serves as cofactor. The cofactor is NAD(+).

Its subcellular location is the cytoplasm. The enzyme catalyses 7-phospho-2-dehydro-3-deoxy-D-arabino-heptonate = 3-dehydroquinate + phosphate. It functions in the pathway metabolic intermediate biosynthesis; chorismate biosynthesis; chorismate from D-erythrose 4-phosphate and phosphoenolpyruvate: step 2/7. Functionally, catalyzes the conversion of 3-deoxy-D-arabino-heptulosonate 7-phosphate (DAHP) to dehydroquinate (DHQ). In Thermoanaerobacter sp. (strain X514), this protein is 3-dehydroquinate synthase.